The following is a 206-amino-acid chain: MRILIPFKANNPKSRLSSILSEEERKELARLMLLDVIDAAKPFGEIKVVCPSELDVEGVEVVVDTSDLNTTVNKVMDEAPLAVIMSDLPLLSEEVLKRFFETEGDVVVAPGRKGGTNMLLVRKRGFRVSYHFGSFFKHLEMARKMGMKAKIFDSFYSSVDIDDESDLLELMMHGSGKKSYEFLRKIGFSVSFEETPRLERRVFMQP.

Belongs to the CofC family. Homodimer.

It catalyses the reaction (2S)-2-phospholactate + GTP + H(+) = (2S)-lactyl-2-diphospho-5'-guanosine + diphosphate. The protein operates within cofactor biosynthesis; coenzyme F420 biosynthesis. Guanylyltransferase that catalyzes the activation of (2S)-2-phospholactate (2-PL) as (2S)-lactyl-2-diphospho-5'-guanosine, via the condensation of 2-PL with GTP. It is involved in the biosynthesis of coenzyme F420, a hydride carrier cofactor. This chain is 2-phospho-L-lactate guanylyltransferase, found in Archaeoglobus fulgidus (strain ATCC 49558 / DSM 4304 / JCM 9628 / NBRC 100126 / VC-16).